We begin with the raw amino-acid sequence, 508 residues long: Lysine--tRNA ligase (508 aa).

Glu418 and Glu425 together coordinate Mg(2+).

Belongs to the class-II aminoacyl-tRNA synthetase family. As to quaternary structure, homodimer. Mg(2+) serves as cofactor.

It is found in the cytoplasm. It catalyses the reaction tRNA(Lys) + L-lysine + ATP = L-lysyl-tRNA(Lys) + AMP + diphosphate. The protein is Lysine--tRNA ligase of Burkholderia pseudomallei (strain K96243).